We begin with the raw amino-acid sequence, 510 residues long: Pentatricopeptide repeat-containing protein At1g71060, mitochondrial (510 aa).

The transit peptide at methionine 1–leucine 14 directs the protein to the mitochondrion. PPR repeat units lie at residues threonine 127 to lysine 157, serine 161 to methionine 195, glutamate 196 to proline 230, aspartate 231 to proline 265, aspartate 266 to proline 300, serine 301 to leucine 335, glutamate 336 to proline 370, asparagine 371 to glutamate 401, threonine 403 to proline 437, and glycine 438 to proline 472.

Belongs to the PPR family. P subfamily.

It is found in the mitochondrion. The polypeptide is Pentatricopeptide repeat-containing protein At1g71060, mitochondrial (Arabidopsis thaliana (Mouse-ear cress)).